The following is a 405-amino-acid chain: Farnesyl pyrophosphate synthase (405 aa).

Residues Asp-158 and Asp-162 each coordinate Mg(2+). Residues 158–162 (DDLAD) carry the DDXXD motif motif.

This sequence belongs to the FPP/GGPP synthase family. It depends on Mg(2+) as a cofactor.

It catalyses the reaction isopentenyl diphosphate + (2E)-geranyl diphosphate = (2E,6E)-farnesyl diphosphate + diphosphate. The protein operates within pheromone biosynthesis. Functionally, farnesyl pyrophosphate synthase involved in murgantiol biosynthesis, a male-released aggregation pheromone, by catalyzing the formation of (2E,6E)-farnesyl diphosphate. The protein is Farnesyl pyrophosphate synthase of Murgantia histrionica (Harlequin bug).